The chain runs to 212 residues: Methylthioribulose-1-phosphate dehydratase (212 aa).

Histidine 97 and histidine 99 together coordinate Zn(2+).

The protein belongs to the aldolase class II family. MtnB subfamily. As to quaternary structure, homotetramer. Zn(2+) is required as a cofactor.

The catalysed reaction is 5-(methylsulfanyl)-D-ribulose 1-phosphate = 5-methylsulfanyl-2,3-dioxopentyl phosphate + H2O. It participates in amino-acid biosynthesis; L-methionine biosynthesis via salvage pathway; L-methionine from S-methyl-5-thio-alpha-D-ribose 1-phosphate: step 2/6. Catalyzes the dehydration of methylthioribulose-1-phosphate (MTRu-1-P) into 2,3-diketo-5-methylthiopentyl-1-phosphate (DK-MTP-1-P). This is Methylthioribulose-1-phosphate dehydratase from Bacillus thuringiensis subsp. konkukian (strain 97-27).